An 873-amino-acid polypeptide reads, in one-letter code: Leucine--tRNA ligase (873 aa).

Residues 42 to 52 (PYPSGKLHMGH) carry the 'HIGH' region motif. The 'KMSKS' region signature appears at 628 to 632 (KMSKS). Lys631 provides a ligand contact to ATP.

Belongs to the class-I aminoacyl-tRNA synthetase family.

Its subcellular location is the cytoplasm. The enzyme catalyses tRNA(Leu) + L-leucine + ATP = L-leucyl-tRNA(Leu) + AMP + diphosphate. The sequence is that of Leucine--tRNA ligase from Azoarcus sp. (strain BH72).